The chain runs to 102 residues: uncharacterized protein (102 aa).

This is an uncharacterized protein from Methanocaldococcus jannaschii (strain ATCC 43067 / DSM 2661 / JAL-1 / JCM 10045 / NBRC 100440) (Methanococcus jannaschii).